Here is a 196-residue protein sequence, read N- to C-terminus: Beta-crystallin A4 (196 aa).

Residue Thr-2 is modified to N-acetylthreonine. The N-terminal arm stretch occupies residues 2–11 (TLQCTKSAGP). 2 Beta/gamma crystallin 'Greek key' domains span residues 12-51 (WKMV…KVLS) and 52-98 (GAWV…RPAA). Residues 99–104 (CANHRD) form a connecting peptide region. Beta/gamma crystallin 'Greek key' domains lie at 105–146 (SRLT…HVHS) and 147–195 (GAWV…RRIQ).

This sequence belongs to the beta/gamma-crystallin family. As to quaternary structure, homo/heterodimer, or complexes of higher-order. The structure of beta-crystallin oligomers seems to be stabilized through interactions between the N-terminal arms.

In terms of biological role, crystallins are the dominant structural components of the vertebrate eye lens. The sequence is that of Beta-crystallin A4 (CRYBA4) from Homo sapiens (Human).